The primary structure comprises 330 residues: Ubiquinone biosynthesis protein COQ4, mitochondrial (330 aa).

Residues 1 to 31 (MLQSTKVTKSVLTNVLRVEQRRGFLLSGAAV) constitute a mitochondrion transit peptide. Zn(2+)-binding residues include H212, D213, H216, and E228.

The protein belongs to the COQ4 family. As to quaternary structure, component of a multi-subunit COQ enzyme complex, composed of at least COQ3, COQ4, COQ5, COQ6, COQ7 and COQ9. The cofactor is Zn(2+).

The protein resides in the mitochondrion inner membrane. It catalyses the reaction a 4-hydroxy-3-methoxy-5-(all-trans-polyprenyl)benzoate + H(+) = a 2-methoxy-6-(all-trans-polyprenyl)phenol + CO2. Its pathway is cofactor biosynthesis; ubiquinone biosynthesis. In terms of biological role, lyase that catalyzes the C1-decarboxylation of 4-hydroxy-3-methoxy-5-(all-trans-polyprenyl)benzoic acid into 2-methoxy-6-(all-trans-polyprenyl)phenol during ubiquinone biosynthesis. The sequence is that of Ubiquinone biosynthesis protein COQ4, mitochondrial from Candida glabrata (strain ATCC 2001 / BCRC 20586 / JCM 3761 / NBRC 0622 / NRRL Y-65 / CBS 138) (Yeast).